A 2793-amino-acid chain; its full sequence is Iterative polyketide synthase afoE (2793 aa).

An N-terminal acylcarrier protein transacylase domain (SAT) region spans residues 1 to 401; that stretch reads MTRASASGSG…PEKPSFWLTP (401 aa). Cys157 functions as the Nucleophile; for transacylase activity in the catalytic mechanism. His279 functions as the Proton donor/acceptor; for transacylase activity in the catalytic mechanism. One can recognise a Ketosynthase family 3 (KS3) domain in the interval 435-862; the sequence is SEPIAIVGMS…GSNASMIVTQ (428 aa). Active-site for beta-ketoacyl synthase activity residues include Cys611, His746, and His785. A malonyl-CoA:ACP transacylase (MAT) region spans residues 977 to 1265; the sequence is FGGQISRFVG…SSTITVMAGR (289 aa). Residues 1384–1515 are N-terminal hotdog fold; it reads WEFVGYQDDE…ATVEMRSSSD (132 aa). In terms of domain architecture, PKS/mFAS DH spans 1384-1698; the sequence is WEFVGYQDDE…YMRVAKASMS (315 aa). The interval 1411–1696 is product template (PT) domain; sequence YVLSHVIAQT…VQYMRVAKAS (286 aa). His1415 serves as the catalytic Proton acceptor; for dehydratase activity. The C-terminal hotdog fold stretch occupies residues 1550-1698; it reads VEVLQGRNVY…YMRVAKASMS (149 aa). The Proton donor; for dehydratase activity role is filled by Asp1607. Positions 1734-1776 are disordered; it reads PEVRASSEPGAKVKASKTSKKEKKEKKPVTKAKSKSSKPSGWR. Over residues 1747-1769 the composition is skewed to basic residues; the sequence is KASKTSKKEKKEKKPVTKAKSKS. One can recognise a Carrier domain in the interval 1776–1850; sequence RDITEEVRNL…KFVQCVSNAL (75 aa). Ser1810 is modified (O-(pantetheine 4'-phosphoryl)serine). A disordered region spans residues 1853–1903; sequence PNAGPAEAEDDEDEEKSDNSSSESASESDDAGSESSDTGILTPTGEEEQPL. A compositionally biased stretch (acidic residues) spans 1859–1868; it reads EAEDDEDEEK. The tract at residues 2115 to 2294 is methyltransferase domain; sequence NLLAERIGRT…HVDWTDGNLP (180 aa). Positions 2360–2379 are disordered; that stretch reads SRAEKESGKTQAPHAAPGRR. Residues 2387 to 2630 form an NADPH-binding domain region; it reads VTGATGSLGS…QWIPVDYCAA (244 aa).

The cofactor is pantetheine 4'-phosphate.

The catalysed reaction is (3E,5E,7S)-5,7-dimethyl-2-oxonona-3,5-dienyl-[ACP] + 4 malonyl-CoA + AH2 + S-adenosyl-L-methionine + 3 H(+) = 6-[(3E,5E,7S)-5,7-dimethyl-2-oxonona-3,5-dienyl]-2,4-dihydroxy-3-methylbenzaldehyde + holo-[ACP] + A + S-adenosyl-L-homocysteine + 4 CO2 + 4 CoA + H2O. It participates in secondary metabolite biosynthesis. In terms of biological role, iterative polyketide synthase; part of the gene cluster that mediates the biosynthesis of asperfuranone, a probable antitumor agent. The polyketide synthase afoG is responsible for producing the 3,5-dimethyloctadienone moiety from acetyl-CoA, three malonyl-CoA, and two S-adenosyl methionines (SAM). The 3,5-dimethyloctadienone moiety is then loaded onto the SAT domain of afoE and extended with four malonyl-CoA and one SAM, which leads to the formation of 2,4-dihydroxy-6-(5,7-dimethyl-2-oxo-trans-3-trans-5-nonadienyl)-3-methylbenzaldehyde (compound 2) after reductive release and aldol condensation. AfoD is the next enzyme in the biosynthesis sequence and hydroxylates the side chain at the benzylic position of compound 2. After benzylic hydroxylation, a furan ring is formed after five-member ring hemiacetal formation and water elimination. AfoF and afoC are proposed to oxidize the R-diketone proton and to reduce the unconjugated carbonyl group, respectively, to generate asperfuranone. Since no intermediates could be isolated from afoF and afoC deletants, the sequence of these two enzymes is not fully understood. Moreover, since afoC deletant still produces a small amount of asperfuranone, other endogenous oxidoreductases might catalyze the same reaction with much less efficiency. The chain is Iterative polyketide synthase afoE from Emericella nidulans (strain FGSC A4 / ATCC 38163 / CBS 112.46 / NRRL 194 / M139) (Aspergillus nidulans).